The primary structure comprises 433 residues: ATP-dependent protease ATPase subunit HslU (433 aa).

ATP-binding positions include isoleucine 18, 60–65 (GVGKTE), aspartate 246, glutamate 311, and arginine 383.

Belongs to the ClpX chaperone family. HslU subfamily. A double ring-shaped homohexamer of HslV is capped on each side by a ring-shaped HslU homohexamer. The assembly of the HslU/HslV complex is dependent on binding of ATP.

The protein localises to the cytoplasm. Its function is as follows. ATPase subunit of a proteasome-like degradation complex; this subunit has chaperone activity. The binding of ATP and its subsequent hydrolysis by HslU are essential for unfolding of protein substrates subsequently hydrolyzed by HslV. HslU recognizes the N-terminal part of its protein substrates and unfolds these before they are guided to HslV for hydrolysis. This Cereibacter sphaeroides (strain ATCC 17025 / ATH 2.4.3) (Rhodobacter sphaeroides) protein is ATP-dependent protease ATPase subunit HslU.